A 162-amino-acid polypeptide reads, in one-letter code: Putative colanic acid biosynthesis acetyltransferase WcaB (162 aa).

Belongs to the transferase hexapeptide repeat family.

The protein operates within slime biogenesis; slime polysaccharide biosynthesis. The chain is Putative colanic acid biosynthesis acetyltransferase WcaB (wcaB) from Escherichia coli O157:H7.